A 276-amino-acid chain; its full sequence is Carboxysome assembly protein CcmO (276 aa).

2 BMC domains span residues 16–100 (ALGV…AVLP) and 120–204 (AIGL…DSLP). 2 disordered regions span residues 200–219 (MDSLPEPQSDSEAAQPLQLP) and 252–276 (QSALELAQETPLAEPLELPNPRDDQ).

Belongs to the bacterial microcompartments protein family. As to quaternary structure, homooligomerizes, possibly as a trimer, interacts with CcmK2 in the carboxysome.

Its subcellular location is the carboxysome. In terms of biological role, required for formation of the carboxysome, a polyhedral inclusion where RuBisCO (ribulose bisphosphate carboxylase, rbcL-rbcS) is sequestered. Required for recruitment of major shell protein CcmK2 to the pre-carboxysome. Suggested to be a carboxysome shell protein, but it is not detected in gels, mass spectrometry or by protein sequencing. Beta-carboxysome assembly initiates when soluble RuBisCO is condensed into a liquid matrix in a pre-carboxysome by the RbcS-like domains of probably both CcmM58 and CcmM35. CcmN interacts with the N-terminus of CcmM58, and then recruits the CcmK2 major shell protein via CcmN's encapsulation peptide. Shell formation requires CcmK proteins and CcmO. CcmL caps the otherwise elongated carboxysome. Once fully encapsulated carboxysomes are formed, they migrate within the cell probably via interactions with the cytoskeleton. The protein is Carboxysome assembly protein CcmO of Synechococcus elongatus (strain ATCC 33912 / PCC 7942 / FACHB-805) (Anacystis nidulans R2).